The following is a 522-amino-acid chain: E3 ubiquitin-protein ligase DMA2 (522 aa).

2 disordered regions span residues Met-1–Ser-56 and Gln-69–Ser-92. The segment covering Ala-14–Ser-35 has biased composition (low complexity). Residues Gly-36–Asn-49 show a composition bias toward polar residues. Residue Ser-206 is modified to Phosphoserine. Residues Lys-211, Lys-256, Lys-258, Lys-288, Lys-310, Lys-333, Lys-343, Lys-346, Lys-366, Lys-406, Lys-412, and Lys-423 each participate in a glycyl lysine isopeptide (Lys-Gly) (interchain with G-Cter in ubiquitin) cross-link. Residues Leu-295–Leu-358 enclose the FHA domain. The segment at Cys-433–Arg-477 adopts an RING-type zinc-finger fold.

The protein belongs to the DMA1 family. Post-translationally, UBC4-dependent autoubiquitination occurs at Lys-211, Lys-258, Lys-288, Lys-310, Lys-333, Lys-343, Lys-346, Lys-366, Lys-406, Lys-412 and Lys-423. UBC4-dependent autoubiquitination is responsible for DMA2 turnover. UBC13/MMS2-dependent autoubiquitination occurs at Lys-258, Lys-310, Lys-346 and Lys-366. Lys-211, Lys-256, Lys-288, Lys-310, Lys-343, Lys-258, Lys-366 and Lys-412 are also ubiquitinated in trans by DMA1 E3 ligase in association with UBC4.

The protein localises to the cytoplasm. The catalysed reaction is S-ubiquitinyl-[E2 ubiquitin-conjugating enzyme]-L-cysteine + [acceptor protein]-L-lysine = [E2 ubiquitin-conjugating enzyme]-L-cysteine + N(6)-ubiquitinyl-[acceptor protein]-L-lysine.. Functionally, E3 ubiquitin-protein ligase which functions in cell cycle retarding in conjunction with the UBC4 and UBC13/MMS2 complex, 2 E2 ubiquitin conjugating enzymes. Involved in nutritional control of the cell cycle. Required for proper spindle positioning, likely regulating septin ring deposition at the bud neck. The protein is E3 ubiquitin-protein ligase DMA2 (DMA2) of Saccharomyces cerevisiae (strain ATCC 204508 / S288c) (Baker's yeast).